The chain runs to 261 residues: Carboxy-terminal domain RNA polymerase II polypeptide A small phosphatase 1 (261 aa).

M1 carries the N-acetylmethionine modification. The span at M1 to I10 shows a compositional bias: polar residues. The tract at residues M1 to P33 is disordered. Residues S11–Q25 are compositionally biased toward basic and acidic residues. Residues Q86–L244 form the FCP1 homology domain. The 4-aspartylphosphate intermediate role is filled by D96. Mg(2+) contacts are provided by D96, D98, and N207. Residue D98 is the Proton donor of the active site.

In terms of assembly, monomer. Interacts with GTF2F1. Interacts with REST. The cofactor is Mg(2+). Expression is restricted to non-neuronal tissues. Highest expression in skeletal muscle, spleen, lung and placenta.

The protein resides in the nucleus. The catalysed reaction is O-phospho-L-seryl-[protein] + H2O = L-seryl-[protein] + phosphate. It catalyses the reaction O-phospho-L-threonyl-[protein] + H2O = L-threonyl-[protein] + phosphate. Its activity is regulated as follows. Stimulated by GTF2F1. Inhibited by beryllofluoride anions. Functionally, preferentially catalyzes the dephosphorylation of 'Ser-5' within the tandem 7 residue repeats in the C-terminal domain (CTD) of the largest RNA polymerase II subunit POLR2A. Negatively regulates RNA polymerase II transcription, possibly by controlling the transition from initiation/capping to processive transcript elongation. Recruited by REST to neuronal genes that contain RE-1 elements, leading to neuronal gene silencing in non-neuronal cells. This chain is Carboxy-terminal domain RNA polymerase II polypeptide A small phosphatase 1 (CTDSP1), found in Homo sapiens (Human).